The primary structure comprises 333 residues: Transaldolase (333 aa).

Lys-135 functions as the Schiff-base intermediate with substrate in the catalytic mechanism.

This sequence belongs to the transaldolase family. Type 1 subfamily. As to quaternary structure, homodimer.

It localises to the cytoplasm. The enzyme catalyses D-sedoheptulose 7-phosphate + D-glyceraldehyde 3-phosphate = D-erythrose 4-phosphate + beta-D-fructose 6-phosphate. Its pathway is carbohydrate degradation; pentose phosphate pathway; D-glyceraldehyde 3-phosphate and beta-D-fructose 6-phosphate from D-ribose 5-phosphate and D-xylulose 5-phosphate (non-oxidative stage): step 2/3. Its function is as follows. Transaldolase is important for the balance of metabolites in the pentose-phosphate pathway. The sequence is that of Transaldolase from Prochlorococcus marinus (strain MIT 9312).